A 378-amino-acid polypeptide reads, in one-letter code: Chitinase (378 aa).

Residues 1–28 (MNFTVKYSFLVICLLCCLLSTYVSVIEG) form the signal peptide. Residues 53–378 (GIIQGYYPSW…AIEYFVESLH (326 aa)) enclose the GH18 domain. The active-site Proton donor is glutamate 174. Cysteine 220 and cysteine 230 are disulfide-bonded.

It belongs to the glycosyl hydrolase 18 family. In terms of assembly, forms a hetero-multimeric, high molecular weight complex composed of at least CHT1, SOAP AND WARP. Within the complex, may interact with WARP via a disulfide bond.

Its subcellular location is the secreted. The protein localises to the cytoplasmic vesicle. The protein resides in the secretory vesicle. It localises to the microneme. It carries out the reaction Random endo-hydrolysis of N-acetyl-beta-D-glucosaminide (1-&gt;4)-beta-linkages in chitin and chitodextrins.. With respect to regulation, inhibited by allosamidin. Functionally, endochitinase that cleaves beta-1,4-linkages between tri- and tetramers of N-acetylglucosamine (GlcNAc) from penta- and hexameric chitin oligomers. Does not cleave smaller chitin oligosaccharides. Required to cross the acellular, chitin-containing peritrophic matrix (PM) which is formed around the ingested blood meal in the mosquito midgut allowing the ookinete to invade the mosquito gut epithelium. This chain is Chitinase, found in Plasmodium falciparum (isolate 3D7).